The sequence spans 329 residues: Replication factor C small subunit 1 (329 aa).

44-51 (GPPGTGKT) provides a ligand contact to ATP.

It belongs to the activator 1 small subunits family. RfcS subfamily. In terms of assembly, heteromultimer composed of small subunits (RfcS) and large subunits (RfcL).

In terms of biological role, part of the RFC clamp loader complex which loads the PCNA sliding clamp onto DNA. In Pyrobaculum islandicum (strain DSM 4184 / JCM 9189 / GEO3), this protein is Replication factor C small subunit 1.